A 534-amino-acid chain; its full sequence is DNA-directed RNA polymerase III subunit RPC3 (534 aa).

The interval 161-181 (PSVPTTENSDPGPPPPAPTLV) is disordered. Ser-194 is subject to Phosphoserine. The segment at 197–228 (GKGKRRRSSDEDAAGEPKAKRPKYTTDNKEPI) is disordered. Over residues 211 to 228 (GEPKAKRPKYTTDNKEPI) the composition is skewed to basic and acidic residues.

This sequence belongs to the eukaryotic RPC3/POLR3C RNA polymerase subunit family. As to quaternary structure, component of the RNA polymerase III complex consisting of 17 subunits: a ten-subunit horseshoe-shaped catalytic core composed of POLR3A/RPC1, POLR3B/RPC2, POLR1C/RPAC1, POLR1D/RPAC2, POLR3K/RPC10, POLR2E/RPABC1, POLR2F/RPABC2, POLR2H/RPABC3, POLR2K/RPABC4 and POLR2L/RPABC5; a mobile stalk composed of two subunits POLR3H/RPC8 and CRCP/RPC9, protruding from the core and functioning primarily in transcription initiation; and additional subunits homologous to general transcription factors of the RNA polymerase II machinery, POLR3C/RPC3-POLR3F/RPC6-POLR3G/RPC7 heterotrimer required for transcription initiation and POLR3D/RPC4-POLR3E/RPC5 heterodimer involved in both transcription initiation and termination. Directly interacts with POLR3G/RPC7 and POLR3GL. Directly interacts with POLR3F/RPC6. Interacts with GTF3C4. As part of the RNA polymerase III complex, interacts with PKP2.

Its subcellular location is the nucleus. Functionally, DNA-dependent RNA polymerase catalyzes the transcription of DNA into RNA using the four ribonucleoside triphosphates as substrates. Specific peripheric component of RNA polymerase III (Pol III) which synthesizes small non-coding RNAs including 5S rRNA, snRNAs, tRNAs and miRNAs from at least 500 distinct genomic loci. Part of POLR3C/RPC3-POLR3F/RPC6-POLR3G/RPC7 heterotrimer, coordinates the dynamics of Pol III stalk and clamp modules during the transition from apo to elongation state. Pol III plays a key role in sensing and limiting infection by intracellular bacteria and DNA viruses. Acts as a nuclear and cytosolic DNA sensor involved in innate immune response. Can sense non-self dsDNA that serves as template for transcription into dsRNA. The non-self RNA polymerase III transcripts, such as Epstein-Barr virus-encoded RNAs (EBERs) induce type I interferon and NF-kappa-B through the RIG-I pathway. Preferentially binds single-stranded DNA (ssDNA) in a sequence-independent manner. This is DNA-directed RNA polymerase III subunit RPC3 from Homo sapiens (Human).